We begin with the raw amino-acid sequence, 1032 residues long: Toll-like receptor 9 (1032 aa).

A signal peptide spans 1–25 (MGPCRGALHPLSLLVQAAALALALA). The Extracellular segment spans residues 26 to 815 (QGTLPAFLPC…QDLRLCLDEA (790 aa)). Cys-35 and Cys-45 are oxidised to a cystine. 47-51 (WLFLK) contributes to the DNA binding site. LRR repeat units follow at residues 62–85 (RGNV…DFVH), 87–110 (VHLR…HFPC), 122–147 (VPTL…SLVS), 150–166 (LSRT…LAGL), 167–190 (YALR…ALQV), 198–221 (LGNL…LPPS), 223–242 (EYLL…DLAN), 243–268 (LTAL…CREC), 283–306 (LSHL…WFHG), 308–332 (GNLM…AFYG), 333–356 (LARL…HLHL), 363–386 (LLSL…TLQS), 390–413 (LPML…IFGA), 415–440 (PGLR…TGEV), 472–496 (CRTL…MFVR), 498–521 (ARLQ…QFVP), 522–545 (LSNL…SFTE), 547–574 (PRLE…SFVA), 576–600 (LPAL…LRSA), 602–624 (LRAL…LYLR), 629–652 (LRSL…NLDN), 654–677 (PKSL…SLAL), 678–701 (LPKL…SLPN), 703–725 (TQLQ…FFAL), 726–749 (AVRL…WFGS), and 751–774 (AGAL…TFVD). N-linked (GlcNAc...) asparagine glycosylation is present at Asn-64. DNA is bound by residues 72-77 (SNRIHH) and 95-109 (KWNC…MHFP). The cysteines at positions 98 and 110 are disulfide-linked. Asn-129 carries an N-linked (GlcNAc...) asparagine glycan. Residues Tyr-132, Arg-152, and 179–181 (YYK) contribute to the DNA site. The cysteines at positions 178 and 184 are disulfide-linked. N-linked (GlcNAc...) asparagine glycosylation is present at Asn-200. Tyr-208 provides a ligand contact to DNA. N-linked (GlcNAc...) asparagine glycans are attached at residues Asn-210 and Asn-242. 2 disulfides stabilise this stretch: Cys-255–Cys-268 and Cys-258–Cys-265. A lipid anchor (S-palmitoyl cysteine) is attached at Cys-258. A DNA-binding site is contributed by Arg-262. Cys-265 is lipidated: S-palmitoyl cysteine. Residue Asn-340 is glycosylated (N-linked (GlcNAc...) asparagine). Cys-472 and Cys-502 are joined by a disulfide. Residues Asn-476 and Asn-515 are each glycosylated (N-linked (GlcNAc...) asparagine). Asn-569 carries an N-linked (GlcNAc...) asparagine glycan. Residues Asn-671, Asn-696, and Asn-701 are each glycosylated (N-linked (GlcNAc...) asparagine). N-linked (GlcNAc...) asparagine glycosylation occurs at Asn-733. 2 disulfide bridges follow: Cys-766-Cys-792 and Cys-768-Cys-811. The helical transmembrane segment at 816–836 (LSWVCFSLSLLAVALSLAVPM) threads the bilayer. Topologically, residues 837–1032 (LHQLCGWDLW…QNFCRGPTTA (196 aa)) are cytoplasmic. The TIR domain maps to 868-1013 (LAYDAFVVFD…SFWAQLGTAL (146 aa)).

Belongs to the Toll-like receptor family. As to quaternary structure, monomer and homodimer. Exists as a monomer in the absence of unmethylated cytidine-phosphate-guanosine (CpG) ligand. Proteolytic processing of an insertion loop (Z-loop) is required for homodimerization upon binding to the unmethylated CpG ligand leading to its activation. Interacts with MYD88 via their respective TIR domains. Interacts with BTK. Interacts (via transmembrane domain) with UNC93B1. Interacts with CD300LH; the interaction may promote full activation of TLR9-triggered innate responses. Interacts with CNPY3 and HSP90B1; this interaction is required for proper folding in the endoplasmic reticulum. Interacts with SMPDL3B. Interacts with CD82; this interaction is essential for TLR9-dependent myddosome formation in response to CpG stimulation. Post-translationally, activated by proteolytic cleavage of the flexible loop between repeats LRR14 and LRR15 within the ectodomain. Cleavage requires UNC93B1. Proteolytically processed by first removing the majority of the ectodomain by either asparagine endopeptidase (AEP) or a cathepsin followed by a trimming event that is solely cathepsin mediated and required for optimal receptor signaling. Palmitoylated by ZDHHC3 in the Golgi regulates TLR9 trafficking from the Golgi to endosomes. Depalmitoylation by PPT1 controls the release of TLR9 from UNC93B1 in endosomes.

The protein localises to the endoplasmic reticulum membrane. It localises to the endosome. The protein resides in the lysosome. Its subcellular location is the cytoplasmic vesicle. It is found in the phagosome. Key component of innate and adaptive immunity. TLRs (Toll-like receptors) control host immune response against pathogens through recognition of molecular patterns specific to microorganisms. TLR9 is a nucleotide-sensing TLR which is activated by unmethylated cytidine-phosphate-guanosine (CpG) dinucleotides. Acts via MYD88 and TRAF6, leading to NF-kappa-B activation, cytokine secretion and the inflammatory response. Upon CpG stimulation, induces B-cell proliferation, activation, survival and antibody production. This Canis lupus familiaris (Dog) protein is Toll-like receptor 9 (TLR9).